The following is a 66-amino-acid chain: Large ribosomal subunit protein bL35 (66 aa).

This sequence belongs to the bacterial ribosomal protein bL35 family.

The protein is Large ribosomal subunit protein bL35 of Azorhizobium caulinodans (strain ATCC 43989 / DSM 5975 / JCM 20966 / LMG 6465 / NBRC 14845 / NCIMB 13405 / ORS 571).